The chain runs to 318 residues: Thymidylate synthase (318 aa).

Residues arginine 25 and 180–181 (RR) each bind dUMP. The active-site Nucleophile is cysteine 200. DUMP contacts are provided by residues 220-223 (RSGD), asparagine 231, and 261-263 (HIY). (6R)-5,10-methylene-5,6,7,8-tetrahydrofolate is bound at residue aspartate 223. Alanine 317 serves as a coordination point for (6R)-5,10-methylene-5,6,7,8-tetrahydrofolate.

This sequence belongs to the thymidylate synthase family. Bacterial-type ThyA subfamily. Homodimer.

The protein resides in the cytoplasm. It carries out the reaction dUMP + (6R)-5,10-methylene-5,6,7,8-tetrahydrofolate = 7,8-dihydrofolate + dTMP. It participates in pyrimidine metabolism; dTTP biosynthesis. In terms of biological role, catalyzes the reductive methylation of 2'-deoxyuridine-5'-monophosphate (dUMP) to 2'-deoxythymidine-5'-monophosphate (dTMP) while utilizing 5,10-methylenetetrahydrofolate (mTHF) as the methyl donor and reductant in the reaction, yielding dihydrofolate (DHF) as a by-product. This enzymatic reaction provides an intracellular de novo source of dTMP, an essential precursor for DNA biosynthesis. This is Thymidylate synthase from Bacillus cytotoxicus (strain DSM 22905 / CIP 110041 / 391-98 / NVH 391-98).